The primary structure comprises 172 residues: Photosystem I assembly protein Ycf3 (172 aa).

3 TPR repeats span residues 35-70, 74-107, and 122-155; these read AFTY…EIDP, SYIL…NPFL, and GEQA…TPGN.

This sequence belongs to the Ycf3 family.

Its subcellular location is the plastid. The protein localises to the chloroplast thylakoid membrane. Essential for the assembly of the photosystem I (PSI) complex. May act as a chaperone-like factor to guide the assembly of the PSI subunits. This is Photosystem I assembly protein Ycf3 from Sorghum bicolor (Sorghum).